The sequence spans 146 residues: Basic phospholipase A2 paradoxin-like alpha chain (146 aa).

Positions 1-27 (MHPAHLLVLLAVCVSLLGASDIPPLPL) are cleaved as a signal peptide. Disulfide bonds link Cys38-Cys99, Cys54-Cys145, Cys56-Cys72, Cys71-Cys126, Cys78-Cys119, Cys88-Cys112, and Cys106-Cys117. The Ca(2+) site is built by Tyr55, Gly57, and Gly59. His75 is an active-site residue. Asp76 contacts Ca(2+). Residue Asp120 is part of the active site.

Belongs to the phospholipase A2 family. Group I subfamily. D49 sub-subfamily. Heterotrimer of alpha, beta, and gamma chains; non-covalently linked. Ca(2+) is required as a cofactor. As to expression, expressed by the venom gland.

The protein localises to the secreted. It carries out the reaction a 1,2-diacyl-sn-glycero-3-phosphocholine + H2O = a 1-acyl-sn-glycero-3-phosphocholine + a fatty acid + H(+). Heterotrimer: Snake venom phospholipase A2 (PLA2) heterotrimer that acts as a potent presynaptic neurotoxin by blocking synaptic transmission and synaptic vesicle recycling. May act by binding in a calcium-dependent fashion to neurotonal pentraxin-1 (NPTX1) and neurotonal pentraxin-2 (NPTX2), but not to neuronal pentraxin receptor (NPTXR). Also binds to taipoxin-associated calcium binding protein 49 (RCN2), a protein localized in the lumen of endoplasmic reticulum. Its function is as follows. Monomer (alpha chain): Snake venom phospholipase A2 (PLA2) alpha chain that possesses the same high enzymatic activity than the heterotrimer. PLA2 catalyzes the calcium-dependent hydrolysis of the 2-acyl groups in 3-sn-phosphoglycerides. The protein is Basic phospholipase A2 paradoxin-like alpha chain of Oxyuranus microlepidotus (Inland taipan).